Here is a 344-residue protein sequence, read N- to C-terminus: Lipase chaperone (344 aa).

Residues 14–34 (VAVYGAVGLAAIAGVAIWSGA) traverse the membrane as a helical segment. A compositionally biased stretch (low complexity) spans 45–57 (LSADAAARDGASA). Positions 45–78 (LSADAAARDGASAAPPPPARPASAGMPSPLAGSS) are disordered.

Belongs to the lipase chaperone family.

The protein localises to the cell inner membrane. Functionally, may be involved in the folding of the extracellular lipase during its passage through the periplasm. This Burkholderia ambifaria (strain ATCC BAA-244 / DSM 16087 / CCUG 44356 / LMG 19182 / AMMD) (Burkholderia cepacia (strain AMMD)) protein is Lipase chaperone.